The primary structure comprises 215 residues: Ribonuclease T (215 aa).

An Exonuclease domain is found at 20–194 (VVIDVETAGF…YDTLQTAKLF (175 aa)). Mg(2+)-binding residues include Asp23, Glu25, His181, and Asp186. His181 functions as the Proton donor/acceptor in the catalytic mechanism.

It belongs to the RNase T family. In terms of assembly, homodimer. Mg(2+) is required as a cofactor.

Its function is as follows. Trims short 3' overhangs of a variety of RNA species, leaving a one or two nucleotide 3' overhang. Responsible for the end-turnover of tRNA: specifically removes the terminal AMP residue from uncharged tRNA (tRNA-C-C-A). Also appears to be involved in tRNA biosynthesis. The sequence is that of Ribonuclease T from Yersinia pseudotuberculosis serotype O:1b (strain IP 31758).